The sequence spans 108 residues: Small ribosomal subunit protein eS25y (108 aa).

The interval 1–36 is disordered; sequence MAPKKDKVPPPSSKPAKSGGGKQKKKKWSKGKQKEK. Basic residues predominate over residues 22–31; that stretch reads KQKKKKWSKG.

Belongs to the eukaryotic ribosomal protein eS25 family.

The chain is Small ribosomal subunit protein eS25y (RPS25B) from Arabidopsis thaliana (Mouse-ear cress).